A 416-amino-acid polypeptide reads, in one-letter code: 3-oxoacyl-[acyl-carrier-protein] synthase 1 (416 aa).

The 405-residue stretch at 11–415 (FPSVVVTAVT…GHNVALAFGR (405 aa)) folds into the Ketosynthase family 3 (KS3) domain. Residues C171, H311, and H345 each act as for beta-ketoacyl synthase activity in the active site. Residues H311 and H345 each coordinate substrate.

It belongs to the thiolase-like superfamily. Beta-ketoacyl-ACP synthases family.

The protein localises to the cytoplasm. The enzyme catalyses an ultra-long-chain mono-unsaturated fatty acyl-[ACP] + malonyl-[ACP] + H(+) = a 3-oxo-ultra-long-chain mono-unsaturated fatty acyl-[ACP] + holo-[ACP] + CO2. The protein operates within lipid metabolism; mycolic acid biosynthesis. Functionally, part of the mycobacterial fatty acid elongation system FAS-II, which is involved in mycolic acid biosynthesis. Catalyzes the elongation of long chain acyl-ACP substrates by the addition of two carbons from malonyl-ACP to an acyl acceptor. Involved in the initial extension of the mycolate chain and forms monounsaturated fatty acids that averaged 40 carbons in length. This is 3-oxoacyl-[acyl-carrier-protein] synthase 1 (kasA) from Mycobacterium leprae (strain TN).